The following is a 128-amino-acid chain: CD59 glycoprotein (128 aa).

Positions methionine 1 to serine 25 are cleaved as a signal peptide. The UPAR/Ly6 domain occupies leucine 26–serine 108. Disulfide bonds link cysteine 28–cysteine 51, cysteine 31–cysteine 38, and cysteine 44–cysteine 64. Asparagine 43 carries N-linked (GlcNAc...) asparagine glycosylation. N-linked (Glc) (glycation) lysine glycosylation is present at lysine 66. 2 disulfide bridges follow: cysteine 70–cysteine 88 and cysteine 89–cysteine 94. 2 O-linked (GalNAc...) threonine glycosylation sites follow: threonine 76 and threonine 77. The GPI-anchor amidated asparagine moiety is linked to residue asparagine 102. Positions glycine 103–proline 128 are cleaved as a propeptide — removed in mature form.

In terms of assembly, interacts with T-cell surface antigen CD2. N- and O-glycosylated. The N-glycosylation mainly consists of a family of biantennary complex-type structures with and without lactosamine extensions and outer arm fucose residues. Also significant amounts of triantennary complexes (22%). Variable sialylation also present in the Asn-43 oligosaccharide. The predominant O-glycans are mono-sialylated forms of the disaccharide, Gal-beta-1,3GalNAc, and their sites of attachment are probably on Thr-76 and Thr-77. The GPI-anchor of soluble urinary CD59 has no inositol-associated phospholipid, but is composed of seven different GPI-anchor variants of one or more monosaccharide units. Major variants contain sialic acid, mannose and glucosamine. Sialic acid linked to an N-acetylhexosamine-galactose arm is present in two variants. Post-translationally, glycated. Glycation is found in diabetic subjects, but only at minimal levels in nondiabetic subjects. Glycated CD59 lacks MAC-inhibitory function and confers to vascular complications of diabetes.

The protein localises to the cell membrane. It localises to the secreted. Its function is as follows. Potent inhibitor of the complement membrane attack complex (MAC) action, which protects human cells from damage during complement activation. Acts by binding to the beta-haipins of C8 (C8A and C8B) components of the assembling MAC, forming an intermolecular beta-sheet that prevents incorporation of the multiple copies of C9 required for complete formation of the osmolytic pore. Functionally, the soluble form from urine retains its specific complement binding activity, but exhibits greatly reduced ability to inhibit complement membrane attack complex (MAC) assembly on cell membranes. This Homo sapiens (Human) protein is CD59 glycoprotein.